Consider the following 199-residue polypeptide: Acireductone dioxygenase 1 (199 aa).

Fe(2+) contacts are provided by H99, H101, E105, and H144. 4 residues coordinate Ni(2+): H99, H101, E105, and H144.

The protein belongs to the acireductone dioxygenase (ARD) family. The cofactor is Fe(2+). It depends on Ni(2+) as a cofactor.

It is found in the cytoplasm. It localises to the nucleus. It carries out the reaction 1,2-dihydroxy-5-(methylsulfanyl)pent-1-en-3-one + O2 = 4-methylsulfanyl-2-oxobutanoate + formate + 2 H(+). The enzyme catalyses 1,2-dihydroxy-5-(methylsulfanyl)pent-1-en-3-one + O2 = 3-(methylsulfanyl)propanoate + CO + formate + 2 H(+). It participates in amino-acid biosynthesis; L-methionine biosynthesis via salvage pathway; L-methionine from S-methyl-5-thio-alpha-D-ribose 1-phosphate: step 5/6. Catalyzes 2 different reactions between oxygen and the acireductone 1,2-dihydroxy-3-keto-5-methylthiopentene (DHK-MTPene) depending upon the metal bound in the active site. Fe-containing acireductone dioxygenase (Fe-ARD) produces formate and 2-keto-4-methylthiobutyrate (KMTB), the alpha-ketoacid precursor of methionine in the methionine recycle pathway. Ni-containing acireductone dioxygenase (Ni-ARD) produces methylthiopropionate, carbon monoxide and formate, and does not lie on the methionine recycle pathway. This is Acireductone dioxygenase 1 (ARD1) from Arabidopsis thaliana (Mouse-ear cress).